Here is a 610-residue protein sequence, read N- to C-terminus: UvrABC system protein C (610 aa).

A GIY-YIG domain is found at 16–94 (SQPGVYRMYD…IKLYQPRYNV (79 aa)). Positions 204–239 (DQVLTQLISRMETASQNLEFEEAARIRDQIQAVRRV) constitute a UVR domain.

This sequence belongs to the UvrC family. Interacts with UvrB in an incision complex.

The protein localises to the cytoplasm. The UvrABC repair system catalyzes the recognition and processing of DNA lesions. UvrC both incises the 5' and 3' sides of the lesion. The N-terminal half is responsible for the 3' incision and the C-terminal half is responsible for the 5' incision. The polypeptide is UvrABC system protein C (Escherichia coli (strain UTI89 / UPEC)).